Consider the following 430-residue polypeptide: MKRMKLRTNAGPLQGTIQVPGDKSISHRAVILGAVAKGETRVKGLLKGEDVLSTIQAFRNLGVRIEEKDDQLVIEGQGFQGLTAPCQTLNMGNSGTSMRLIAGLLAGQPFSVKMIGDESLSKRPMDRIVYPLKQMGVEISGETDRQFPPLQLQGNRNLQPITYTLPISSAQVKSAILLAALQAKGTTQVVEKEITRNHTEEMIQQFGGRLIVDGKRITLVGPQQLTAQEITVPGDISSAAFWLVAGLIIPGSELLLKNVGVNPTRTGILEVVEKMGAQIVYEDMNKKEQVTSIRVVYSRLKGTIISGGLIPRLIDELPIIALLATQAQGTTCIKDAQELRVKETDRIQVVTDTLNSMGANIKATADGMIIKGPTVLYGANTSTYGDHRIGMMTAIAALLVKQGQVHLDKEEAIMTSYPTFFKDLERLCHD.

Lysine 23, serine 24, and arginine 28 together coordinate 3-phosphoshikimate. Lysine 23 lines the phosphoenolpyruvate pocket. Phosphoenolpyruvate is bound by residues glycine 95 and arginine 123. 3-phosphoshikimate is bound by residues serine 169, glutamine 171, aspartate 315, and lysine 342. Glutamine 171 provides a ligand contact to phosphoenolpyruvate. The active-site Proton acceptor is the aspartate 315. Phosphoenolpyruvate is bound by residues arginine 346 and arginine 388.

This sequence belongs to the EPSP synthase family. In terms of assembly, monomer.

Its subcellular location is the cytoplasm. It carries out the reaction 3-phosphoshikimate + phosphoenolpyruvate = 5-O-(1-carboxyvinyl)-3-phosphoshikimate + phosphate. The protein operates within metabolic intermediate biosynthesis; chorismate biosynthesis; chorismate from D-erythrose 4-phosphate and phosphoenolpyruvate: step 6/7. Its function is as follows. Catalyzes the transfer of the enolpyruvyl moiety of phosphoenolpyruvate (PEP) to the 5-hydroxyl of shikimate-3-phosphate (S3P) to produce enolpyruvyl shikimate-3-phosphate and inorganic phosphate. In Streptococcus pyogenes serotype M3 (strain ATCC BAA-595 / MGAS315), this protein is 3-phosphoshikimate 1-carboxyvinyltransferase.